The following is a 377-amino-acid chain: Serine protease grass (377 aa).

Positions 1–26 (MMIASSLAVLYGIAIVSSMGVQSARA) are cleaved as a signal peptide. Positions 31–89 (DCTTPDGDQGQCMPFSSCRTIEERLTEAQKAGQKVPADYASYLQKALCGEFNGVRHFCC) constitute a Clip domain. Disulfide bonds link cysteine 32–cysteine 88, cysteine 42–cysteine 78, cysteine 48–cysteine 89, cysteine 111–cysteine 243, cysteine 148–cysteine 164, and cysteine 188–cysteine 197. Residues 91 to 118 (SANIQHNSKVMSLFKDENFDCGNFLSQR) form a linker region. The region spanning 119–373 (VSNGYEVKLS…YVQWITDTMA (255 aa)) is the Peptidase S1 domain. Histidine 163 (charge relay system) is an active-site residue. Residues glutamate 179, arginine 181, threonine 184, and aspartate 187 each coordinate Ca(2+). The active-site Charge relay system is aspartate 223. N-linked (GlcNAc...) asparagine glycosylation is found at asparagine 230 and asparagine 270. 2 disulfide bridges follow: cysteine 290/cysteine 304 and cysteine 314/cysteine 349. Residue serine 318 is the Charge relay system of the active site.

It belongs to the peptidase S1 family. CLIP subfamily. Post-translationally, proteolytically cleaved by a tryspin-like protease which is likely to activate grass.

It localises to the secreted. Endopeptidase. Plays a key role in innate immunity by activating the Toll pathway in response to fungal and Gram-positive bacterial infections, presumably downstream of pattern-recognition receptors (PRR), such as PGRP-SA, GNBP1 and GNBP3, and upstream of spz processing enzyme SPE. The chain is Serine protease grass from Drosophila melanogaster (Fruit fly).